We begin with the raw amino-acid sequence, 363 residues long: 3-dehydroquinate synthase (363 aa).

NAD(+) is bound by residues 134–135, K147, and K156; that span reads TT. The Zn(2+) site is built by E189, H254, and H271.

The protein belongs to the sugar phosphate cyclases superfamily. Dehydroquinate synthase family. Requires Co(2+) as cofactor. Zn(2+) serves as cofactor. NAD(+) is required as a cofactor.

It localises to the cytoplasm. The enzyme catalyses 7-phospho-2-dehydro-3-deoxy-D-arabino-heptonate = 3-dehydroquinate + phosphate. Its pathway is metabolic intermediate biosynthesis; chorismate biosynthesis; chorismate from D-erythrose 4-phosphate and phosphoenolpyruvate: step 2/7. Functionally, catalyzes the conversion of 3-deoxy-D-arabino-heptulosonate 7-phosphate (DAHP) to dehydroquinate (DHQ). The sequence is that of 3-dehydroquinate synthase from Prochlorococcus marinus (strain AS9601).